The primary structure comprises 258 residues: Coiled-coil domain-containing protein 127 (258 aa).

Residues lysine 50–isoleucine 170 adopt a coiled-coil conformation.

The sequence is that of Coiled-coil domain-containing protein 127 (CCDC127) from Sus scrofa (Pig).